The chain runs to 1385 residues: Probable serine/threonine-protein kinase DDB_G0268876 (1385 aa).

The Protein kinase domain occupies Leu-758–Leu-1008. Residues Ile-764–Val-772 and Lys-785 each bind ATP. Asp-878 functions as the Proton acceptor in the catalytic mechanism. 3 disordered regions span residues Gly-1040–Ile-1074, Glu-1091–Gly-1266, and Ile-1287–Asn-1339. Residues Val-1055–Lys-1073 show a composition bias toward polar residues. Residues Ser-1107–Arg-1144 show a composition bias toward low complexity. Residues Pro-1145–Pro-1162 show a composition bias toward basic and acidic residues. 3 stretches are compositionally biased toward low complexity: residues Asn-1189–Ile-1232, Phe-1242–Gly-1266, and Asn-1295–Asn-1339.

The protein belongs to the protein kinase superfamily. TKL Ser/Thr protein kinase family.

The catalysed reaction is L-seryl-[protein] + ATP = O-phospho-L-seryl-[protein] + ADP + H(+). It carries out the reaction L-threonyl-[protein] + ATP = O-phospho-L-threonyl-[protein] + ADP + H(+). This Dictyostelium discoideum (Social amoeba) protein is Probable serine/threonine-protein kinase DDB_G0268876.